We begin with the raw amino-acid sequence, 262 residues long: MISTLLIIDAMNLVRRIYAVQQKQHGDTPTALIATQSTTTNALKKLLRIHQPTHAICVFDSHAPSWRHQIYPEYKQGRKPIPELLKQGLPAIQEQFFDLGIDSLVTEEDEADDLIACLADKIAKQQQKCIIVSTDKGFYQLLNESIQLYDYFQNSFVIRQQVHQKMGISIQQLNDYWAITGISSSAIKGVEGIGSKGALSLLQQYGSLNNIFQQAEDSNNKLLTKIKSQQSNAILAKQLVTLKTDIKLGFNLKDLRYTDSTD.

Asp-112 lines the Mg(2+) pocket. The 5'-3' exonuclease domain maps to Gln-171–Thr-258. K(+)-binding residues include Ile-179, Val-190, and Ile-193. Residues Gly-192 to Gly-197 are interaction with DNA.

It belongs to the Xni family. It depends on Mg(2+) as a cofactor. K(+) serves as cofactor.

Its function is as follows. Has flap endonuclease activity. During DNA replication, flap endonucleases cleave the 5'-overhanging flap structure that is generated by displacement synthesis when DNA polymerase encounters the 5'-end of a downstream Okazaki fragment. In Psychromonas ingrahamii (strain DSM 17664 / CCUG 51855 / 37), this protein is Flap endonuclease Xni.